The primary structure comprises 777 residues: Intraflagellar transport protein 80 homolog (777 aa).

WD repeat units follow at residues 12 to 50, 104 to 143, 145 to 185, 186 to 225, 227 to 265, 267 to 306, and 504 to 542; these read KHQELVSCVGWTTAEELYSCSDDHQIVKWNLLTSETSLI, AHCGAVLAGRWNYEGTALVTVGEDGQVKIWSKTGMLRSTL, QQGI…LQWK, AHDGIILKVDWNSVNDLILSAGEDCKYKVWDSYGRVLYGS, PHEHPITSVAWAPDGELFAVGSFHTLRLCDKTGWSYALE, PNTGSIFNIAWSIDGTQIAGACGNGHVVFAHVVEQRWEWK, and KLGTMVHTLAWCDTCNILCGLQDTRFTVWYYPNAVYVDR. Residues 758-777 are disordered; that stretch reads TKERDRSSSGQSSKNTGLKP. A compositionally biased stretch (polar residues) spans 765-777; sequence SSGQSSKNTGLKP.

Component of the IFT complex B, at least composed of IFT20, IFT22, IFT25, IFT27, IFT46, IFT52, TRAF3IP1/IFT54, IFT57, IFT74, IFT80, IFT81, and IFT88. Interacts with IFT88. Interacts with IFT57 and IFT70B.

The protein localises to the cytoplasm. Its subcellular location is the cytoskeleton. It is found in the cilium basal body. The protein resides in the cilium axoneme. In terms of biological role, component of the intraflagellar transport (IFT) complex B, which is essential for the development and maintenance of motile and sensory cilia. This Rattus norvegicus (Rat) protein is Intraflagellar transport protein 80 homolog (Ift80).